Reading from the N-terminus, the 437-residue chain is Methylenetetrahydrofolate--tRNA-(uracil-5-)-methyltransferase TrmFO (437 aa).

10-15 (GAGLAG) contacts FAD.

It belongs to the MnmG family. TrmFO subfamily. Requires FAD as cofactor.

Its subcellular location is the cytoplasm. It carries out the reaction uridine(54) in tRNA + (6R)-5,10-methylene-5,6,7,8-tetrahydrofolate + NADH + H(+) = 5-methyluridine(54) in tRNA + (6S)-5,6,7,8-tetrahydrofolate + NAD(+). The catalysed reaction is uridine(54) in tRNA + (6R)-5,10-methylene-5,6,7,8-tetrahydrofolate + NADPH + H(+) = 5-methyluridine(54) in tRNA + (6S)-5,6,7,8-tetrahydrofolate + NADP(+). In terms of biological role, catalyzes the folate-dependent formation of 5-methyl-uridine at position 54 (M-5-U54) in all tRNAs. The protein is Methylenetetrahydrofolate--tRNA-(uracil-5-)-methyltransferase TrmFO of Brevibacillus brevis (strain 47 / JCM 6285 / NBRC 100599).